The following is a 238-amino-acid chain: Keratin-associated protein 5-3 (238 aa).

Repeat copies occupy residues Cys35–Pro38, Cys41–Pro44, Cys47–Pro50, Cys91–Pro94, Cys150–Pro153, Cys160–Pro163, Cys170–Pro173, Cys189–Pro192, Cys199–Pro202, Cys218–Pro221, and Cys228–Pro231. Residues Cys35–Pro231 are 11 X 4 AA repeats of C-C-X-P.

It belongs to the KRTAP type 5 family. Interacts with hair keratins. As to expression, restricted to hair root, not detected in any other tissues.

Its function is as follows. In the hair cortex, hair keratin intermediate filaments are embedded in an interfilamentous matrix, consisting of hair keratin-associated protein (KRTAP), which are essential for the formation of a rigid and resistant hair shaft through their extensive disulfide bond cross-linking with abundant cysteine residues of hair keratins. The matrix proteins include the high-sulfur and high-glycine-tyrosine keratins. The polypeptide is Keratin-associated protein 5-3 (KRTAP5-3) (Homo sapiens (Human)).